Reading from the N-terminus, the 105-residue chain is Large ribosomal subunit protein uL24 (105 aa).

This sequence belongs to the universal ribosomal protein uL24 family. Part of the 50S ribosomal subunit.

Its function is as follows. One of two assembly initiator proteins, it binds directly to the 5'-end of the 23S rRNA, where it nucleates assembly of the 50S subunit. Functionally, one of the proteins that surrounds the polypeptide exit tunnel on the outside of the subunit. The polypeptide is Large ribosomal subunit protein uL24 (Methylocella silvestris (strain DSM 15510 / CIP 108128 / LMG 27833 / NCIMB 13906 / BL2)).